A 502-amino-acid polypeptide reads, in one-letter code: ATP synthase subunit alpha (502 aa).

ATP is bound at residue 169 to 176 (GDRQTGKT).

This sequence belongs to the ATPase alpha/beta chains family. F-type ATPases have 2 components, CF(1) - the catalytic core - and CF(0) - the membrane proton channel. CF(1) has five subunits: alpha(3), beta(3), gamma(1), delta(1), epsilon(1). CF(0) has three main subunits: a(1), b(2) and c(9-12). The alpha and beta chains form an alternating ring which encloses part of the gamma chain. CF(1) is attached to CF(0) by a central stalk formed by the gamma and epsilon chains, while a peripheral stalk is formed by the delta and b chains.

Its subcellular location is the cell inner membrane. It catalyses the reaction ATP + H2O + 4 H(+)(in) = ADP + phosphate + 5 H(+)(out). Produces ATP from ADP in the presence of a proton gradient across the membrane. The alpha chain is a regulatory subunit. In Kosmotoga olearia (strain ATCC BAA-1733 / DSM 21960 / TBF 19.5.1), this protein is ATP synthase subunit alpha.